The primary structure comprises 215 residues: Adenylate kinase (215 aa).

Position 10-15 (10-15) interacts with ATP; it reads GAGKGT. The segment at 30–59 is NMP; that stretch reads STGDILRENVKNQTELGKKAKEYMDKGLLV. Residues threonine 31, arginine 36, 57 to 59, 85 to 88, and glutamine 92 each bind AMP; these read LLV and GFPR. Positions 126–163 are LID; that stretch reads GRRICKSCGASFHVVYRPPKKEGICDICGGQLYQREDD. Residue arginine 127 participates in ATP binding. 2 residues coordinate Zn(2+): cysteine 130 and cysteine 133. An ATP-binding site is contributed by 136-137; the sequence is SF. Cysteine 150 and cysteine 153 together coordinate Zn(2+). Positions 160 and 171 each coordinate AMP. ATP is bound at residue glutamate 199.

It belongs to the adenylate kinase family. In terms of assembly, monomer.

The protein localises to the cytoplasm. The enzyme catalyses AMP + ATP = 2 ADP. The protein operates within purine metabolism; AMP biosynthesis via salvage pathway; AMP from ADP: step 1/1. Functionally, catalyzes the reversible transfer of the terminal phosphate group between ATP and AMP. Plays an important role in cellular energy homeostasis and in adenine nucleotide metabolism. The protein is Adenylate kinase of Caldicellulosiruptor saccharolyticus (strain ATCC 43494 / DSM 8903 / Tp8T 6331).